A 263-amino-acid chain; its full sequence is Hydroxyethylthiazole kinase (263 aa).

Residue Met45 participates in substrate binding. 2 residues coordinate ATP: Arg121 and Ser167. A substrate-binding site is contributed by Gly194.

Belongs to the Thz kinase family. Mg(2+) serves as cofactor.

It catalyses the reaction 5-(2-hydroxyethyl)-4-methylthiazole + ATP = 4-methyl-5-(2-phosphooxyethyl)-thiazole + ADP + H(+). It functions in the pathway cofactor biosynthesis; thiamine diphosphate biosynthesis; 4-methyl-5-(2-phosphoethyl)-thiazole from 5-(2-hydroxyethyl)-4-methylthiazole: step 1/1. In terms of biological role, catalyzes the phosphorylation of the hydroxyl group of 4-methyl-5-beta-hydroxyethylthiazole (THZ). The protein is Hydroxyethylthiazole kinase of Vibrio parahaemolyticus serotype O3:K6 (strain RIMD 2210633).